The primary structure comprises 478 residues: NADH-quinone oxidoreductase subunit N 1 (478 aa).

The next 14 membrane-spanning stretches (helical) occupy residues 6–26 (TVLP…SGVF), 33–53 (FAIT…LVAA), 71–91 (FADV…VTFN), 99–119 (FEFP…VSAS), 121–141 (LITL…LAAF), 156–176 (FVLG…VYGF), 193–212 (PTAA…GLAF), 244–264 (IAVF…VLGQ), 265–285 (WRDL…IGAI), 299–319 (IGHM…GVSG), 321–341 (LIYL…IIAM), 364–384 (FAFV…LAGF), 388–408 (FYVF…LGII), and 438–458 (AGVS…VFHP).

It belongs to the complex I subunit 2 family. NDH-1 is composed of 14 different subunits. Subunits NuoA, H, J, K, L, M, N constitute the membrane sector of the complex.

It localises to the cell inner membrane. The catalysed reaction is a quinone + NADH + 5 H(+)(in) = a quinol + NAD(+) + 4 H(+)(out). Functionally, NDH-1 shuttles electrons from NADH, via FMN and iron-sulfur (Fe-S) centers, to quinones in the respiratory chain. The immediate electron acceptor for the enzyme in this species is believed to be ubiquinone. Couples the redox reaction to proton translocation (for every two electrons transferred, four hydrogen ions are translocated across the cytoplasmic membrane), and thus conserves the redox energy in a proton gradient. The protein is NADH-quinone oxidoreductase subunit N 1 of Acidiphilium cryptum (strain JF-5).